Consider the following 1372-residue polypeptide: uncharacterized protein (1372 aa).

Residues 1 to 67 (MEATDQEVML…PPAPSKNPMQ (67 aa)) are disordered. Residues 17–28 (MSTSATSSTNGG) are compositionally biased toward polar residues. Positions 75–143 (NLYQTAQEQL…LEEHDRLRRK (69 aa)) form a coiled coil. 5 disordered regions span residues 178–199 (NDLS…LSGD), 238–287 (HINR…QASS), 380–414 (EVSN…EVRR), 427–447 (QSLE…VPVP), and 486–531 (EERM…DSGI). 2 stretches are compositionally biased toward low complexity: residues 184 to 198 (GIGT…SLSG) and 238 to 251 (HINR…HGNG). 2 stretches are compositionally biased toward polar residues: residues 257–287 (TGPS…QASS) and 399–408 (TNGNSATTAP). Residues 409 to 438 (KSEVRRLSGDISSIRDRMQSLEQQRKAFSS) adopt a coiled-coil conformation. Residues 486-499 (EERMRQQQQKEKHS) show a composition bias toward basic and acidic residues. Low complexity predominate over residues 514 to 523 (ALIIEEPPVA). Positions 539 to 580 (LQQQQQLNAAIAALALEERQLEEAANAVNQIEAEFDELTDLH) form a coiled coil. A compositionally biased stretch (low complexity) spans 652–673 (VSKSGPTPNPTSTPNMVSSSPN). Disordered stretches follow at residues 652-679 (VSKS…LRRK), 799-820 (SRQL…RSEH), 860-897 (SQSD…PKRV), 1151-1181 (SSQM…PIPK), and 1231-1250 (SPPS…SPTK). Polar residues-rich tracts occupy residues 860-871 (SQSDSKSLTSPI) and 1151-1160 (SSQMMKTSLP).

This is an uncharacterized protein from Drosophila melanogaster (Fruit fly).